Reading from the N-terminus, the 121-residue chain is Large ribosomal subunit protein bL20 (121 aa).

This sequence belongs to the bacterial ribosomal protein bL20 family.

In terms of biological role, binds directly to 23S ribosomal RNA and is necessary for the in vitro assembly process of the 50S ribosomal subunit. It is not involved in the protein synthesizing functions of that subunit. The sequence is that of Large ribosomal subunit protein bL20 from Orientia tsutsugamushi (strain Boryong) (Rickettsia tsutsugamushi).